Here is an 876-residue protein sequence, read N- to C-terminus: Aspartate--tRNA(Asp/Asn) ligase (876 aa).

The segment at 1-278 is unknown; the sequence is MAATDTPWRP…FGFKRAYEGF (278 aa). The segment at 279–876 is aspartyl-tRNA synthetase; it reads MHVYRSHTCG…PKPKKEVKEG (598 aa). E453 lines the L-aspartate pocket. The interval 477 to 480 is aspartate; sequence QQFK. L-aspartate contacts are provided by R499 and H729. 499–501 serves as a coordination point for ATP; sequence RDE. E763 serves as a coordination point for ATP. R770 is an L-aspartate binding site. Residue 815-818 participates in ATP binding; it reads GVDR.

This sequence belongs to the class-II aminoacyl-tRNA synthetase family. Type 1 subfamily. Homodimer.

The protein localises to the cytoplasm. The enzyme catalyses tRNA(Asx) + L-aspartate + ATP = L-aspartyl-tRNA(Asx) + AMP + diphosphate. Functionally, aspartyl-tRNA synthetase with relaxed tRNA specificity since it is able to aspartylate not only its cognate tRNA(Asp) but also tRNA(Asn). Reaction proceeds in two steps: L-aspartate is first activated by ATP to form Asp-AMP and then transferred to the acceptor end of tRNA(Asp/Asn). This chain is Aspartate--tRNA(Asp/Asn) ligase (aspS), found in Paramagnetospirillum magneticum (strain ATCC 700264 / AMB-1) (Magnetospirillum magneticum).